We begin with the raw amino-acid sequence, 376 residues long: Probable ATP-dependent RNA helicase YfmL (376 aa).

Positions 35–205 (AQLIMDGKDV…RELAQEPEVL (171 aa)) constitute a Helicase ATP-binding domain. ATP is bound at residue 48 to 55 (SPTGTGKT). The short motif at 153–156 (DETD) is the DEAD box element. The Helicase C-terminal domain occupies 231-374 (KLLQKLSRLE…EAVYAGGKLK (144 aa)).

Belongs to the DEAD box helicase family.

The catalysed reaction is ATP + H2O = ADP + phosphate + H(+). Its function is as follows. A probable DEAD-box RNA helicase that plays a role in ribosomal 50S subunit assembly. May be a non-specific RNA helicase. This is Probable ATP-dependent RNA helicase YfmL (yfmL) from Bacillus subtilis (strain 168).